The primary structure comprises 3392 residues: Genome polyprotein (3392 aa).

Positions 1–15 (MNNQRKKTGRPSFNM) are interaction with host EXOC1. Over 1-101 (MNNQRKKTGR…LNIMNRRKRS (101 aa)) the chain is Cytoplasmic. The interval 37–72 (LLSGQGPMKLVMAFIAFLRFLAIPPTAGILARWGSF) is hydrophobic; homodimerization of capsid protein C. Residues 101–114 (SVTMLLMLLPTALA) constitute a propeptide, ER anchor for the capsid protein C, removed in mature form by serine protease NS3. Residues 102 to 119 (VTMLLMLLPTALAFHLTT) form a helical membrane-spanning segment. Residues 120-242 (RGGEPHMIVS…QIQKVETWAL (123 aa)) are Extracellular-facing. Asn183 carries N-linked (GlcNAc...) asparagine; by host glycosylation. A helical membrane pass occupies residues 243-260 (RHPGFTVIALFLAHAIGT). A topological domain (cytoplasmic) is located at residue Ser261. A helical membrane pass occupies residues 262–280 (ITQKGIIFILLMLVTPSMA). Residues 281 to 725 (MRCVGIGNRD…IHQIFGTAYG (445 aa)) lie on the Extracellular side of the membrane. 4 cysteine pairs are disulfide-bonded: Cys283-Cys310, Cys340-Cys401, Cys354-Cys385, and Cys372-Cys396. N-linked (GlcNAc...) asparagine; by host glycosylation is present at Asn347. A fusion peptide region spans residues 378–391 (DRGWGNGCGLFGKG). Asn433 carries an N-linked (GlcNAc...) asparagine; by host glycan. Disulfide bonds link Cys465/Cys565 and Cys582/Cys613. A helical transmembrane segment spans residues 726–746 (VLFSGVSWTMKIGIGILLTWL). Topologically, residues 747 to 752 (GLNSRS) are cytoplasmic. A helical transmembrane segment spans residues 753-773 (TSLSMTCIAVGMVTLYLGVMV). Over 774-1195 (QADSGCVINW…MVGANASDKM (422 aa)) the chain is Extracellular. Cystine bridges form between Cys779–Cys790, Cys830–Cys918, Cys954–Cys998, Cys1055–Cys1104, Cys1066–Cys1088, and Cys1087–Cys1091. Asn905 and Asn982 each carry an N-linked (GlcNAc...) asparagine; by host glycan. N-linked (GlcNAc...) asparagine; by host glycosylation is present at Asn1190. The helical transmembrane segment at 1196-1220 (GMGTTYLALMATFRMRPMFAVGLLF) threads the bilayer. The Cytoplasmic portion of the chain corresponds to 1221 to 1226 (RRLTSR). A helical transmembrane segment spans residues 1227-1245 (EVLLLTVGLSLVASVELPN). Residues 1246–1269 (SLEELGDGLAMGIMMLKLLTDFQS) lie on the Lumenal side of the membrane. Residues 1270–1290 (HQLWATLLSLTFVKTTFSLHY) form a helical membrane-spanning segment. Ala1291 is a topological domain (cytoplasmic). Residues 1292 to 1310 (WKTMAMILSIVSLFPLCLS) traverse the membrane as a helical segment. Residues 1311 to 1315 (TTSQK) are Lumenal-facing. Residues 1316-1336 (TTWLPVLLGSLGCKPLTMFLI) traverse the membrane as a helical segment. Residues 1337–1351 (TENKIWGRKSWPLNE) are Cytoplasmic-facing. Residues 1352–1370 (GIMAVGIVSILLSSLLKND) traverse the membrane as a helical segment. Position 1371 (Val1371) is a topological domain, lumenal. A helical membrane pass occupies residues 1372–1391 (PLAGPLIAGGMLIACYVISG). Residues 1392–1447 (SSADLSLEKAAEVSWEEEAEHSGASHNILVEVQDDGTMKIKDEERDDTLTILLKAT) lie on the Cytoplasmic side of the membrane. An interacts with and activates NS3 protease region spans residues 1398 to 1437 (LEKAAEVSWEEEAEHSGASHNILVEVQDDGTMKIKDEERD). Residues 1448–1468 (LLAISGVYPMSIPATLFVWYF) constitute an intramembrane region (helical). The Cytoplasmic segment spans residues 1469-2148 (WQKKKQRSGV…MEELPDTIET (680 aa)). Residues 1476 to 1653 (SGVLWDTPSP…KASQEGPLPE (178 aa)) form the Peptidase S7 domain. Catalysis depends on charge relay system; for serine protease NS3 activity residues His1526, Asp1550, and Ser1610. One can recognise a Helicase ATP-binding domain in the interval 1656 to 1812 (DEVFRKRNLT…QSNAVIQDEE (157 aa)). The important for RNA-binding stretch occupies residues 1660–1663 (RKRN). Residue 1669-1676 (LHPGSGKT) coordinates ATP. A DEAH box motif is present at residues 1760–1763 (DEAH). The region spanning 1822 to 1988 (SGYDWITDFP…GIIPALFEPE (167 aa)) is the Helicase C-terminal domain. Lys1864 carries the post-translational modification N6-acetyllysine; by host. A helical transmembrane segment spans residues 2149 to 2169 (LMLLALIAVLTGGVTLFFLSG). Over 2170 to 2171 (RG) the chain is Lumenal. Residues 2172–2192 (LGKTSIGLLCVIASSALLWMA) constitute an intramembrane region (helical). Ser2193 is a topological domain (lumenal). Residues 2194-2214 (VEPHWIAASIILEFFLMVLLI) traverse the membrane as a helical segment. Residues 2215 to 2229 (PEPDRQRTPQDNQLA) are Cytoplasmic-facing. A helical transmembrane segment spans residues 2230–2244 (YVVIGLLFMILTAAA). The Lumenal segment spans residues 2245–2276 (NEMGLLETTKKDLGIGHAAAENHHHAAMLDVD). An intramembrane region (helical) is located at residues 2277-2297 (LHPASAWTLYAVATTIITPMM). Topologically, residues 2298–2349 (RHTIENTTANISLTAIANQAAILMGLDKGWPISKMDIGVPLLALGCYSQVNP) are lumenal. N-linked (GlcNAc...) asparagine; by host glycans are attached at residues Asn2303 and Asn2307. Residues 2350–2370 (LTLTAAVFMLVAHYAIIGPGL) traverse the membrane as a helical segment. Over 2371 to 2415 (QAKATREAQKRTAAGIMKNPTVDGIVAIDLDPVVYDAKFEKQLGQ) the chain is Cytoplasmic. The chain crosses the membrane as a helical span at residues 2416–2436 (IMLLILCTSQILLMRTTWALC). At 2437–2461 (ESITLATGPLTTLWEGSPGKFWNTT) the chain is on the lumenal side. N-linked (GlcNAc...) asparagine; by host glycosylation is present at Asn2459. A helical transmembrane segment spans residues 2462–2482 (IAVSMANIFRGSYLAGAGLAF). At 2483-3392 (SLMKSLGGGR…NESDPEGALW (910 aa)) the chain is on the cytoplasmic side. The mRNA cap 0-1 NS5-type MT domain maps to 2495-2756 (TGAQGETLGE…DVDLGAGTRH (262 aa)). An S-adenosyl-L-methionine-binding site is contributed by Ser2549. Ser2549 carries the phosphoserine modification. Lys2554 serves as the catalytic For 2'-O-MTase activity. Positions 2570–2573 (VIDL) match the SUMO-interacting motif motif. Positions 2579, 2580, 2597, 2598, 2624, and 2625 each coordinate S-adenosyl-L-methionine. Asp2639 (for 2'-O-MTase activity) is an active-site residue. Ile2640 contacts S-adenosyl-L-methionine. Residues Lys2673 and Glu2709 each act as for 2'-O-MTase activity in the active site. Tyr2711 serves as a coordination point for S-adenosyl-L-methionine. Glu2930, His2934, Cys2939, and Cys2942 together coordinate Zn(2+). One can recognise a RdRp catalytic domain in the interval 3020-3169 (GNMYADDTAG…KPIDDRFATA (150 aa)). Residues His3204, Cys3220, and Cys3339 each contribute to the Zn(2+) site.

This sequence in the N-terminal section; belongs to the class I-like SAM-binding methyltransferase superfamily. mRNA cap 0-1 NS5-type methyltransferase family. In terms of assembly, homodimer. Interacts (via N-terminus) with host EXOC1 (via C-terminus); this interaction results in EXOC1 degradation through the proteasome degradation pathway. Forms heterodimers with envelope protein E in the endoplasmic reticulum and Golgi. As to quaternary structure, homodimer; in the endoplasmic reticulum and Golgi. Interacts with protein prM. Interacts with non-structural protein 1. In terms of assembly, homodimer; Homohexamer when secreted. Interacts with envelope protein E. Interacts (via N-terminus) with serine protease NS3. As to quaternary structure, forms a heterodimer with serine protease NS3. May form homooligomers. In terms of assembly, forms a heterodimer with NS2B. Interacts with NS4B. Interacts with unphosphorylated RNA-directed RNA polymerase NS5; this interaction stimulates RNA-directed RNA polymerase NS5 guanylyltransferase activity. Interacts with host SHFL. Interacts with host MAVS; this interaction inhibits the synthesis of IFN-beta. Interacts with host SHFL. Interacts with host AUP1; the interaction occurs in the presence of Dengue virus NS4B and induces lipophagy which facilitates production of virus progeny particles. As to quaternary structure, interacts with serine protease NS3. In terms of assembly, homodimer. Interacts with host STAT2; this interaction inhibits the phosphorylation of the latter, and, when all viral proteins are present (polyprotein), targets STAT2 for degradation. Interacts with serine protease NS3. Post-translationally, sumoylation of RNA-directed RNA polymerase NS5 increases NS5 protein stability allowing proper viral RNA replication. In terms of processing, specific enzymatic cleavages in vivo yield mature proteins. Cleavages in the lumen of endoplasmic reticulum are performed by host signal peptidase, whereas cleavages in the cytoplasmic side are performed by the Serine protease NS3. Signal cleavage at the 2K-4B site requires a prior NS3 protease-mediated cleavage at the 4A-2K site. Cleaved in post-Golgi vesicles by a host furin, releasing the mature small envelope protein M, and peptide pr. This cleavage is incomplete as up to 30% of viral particles still carry uncleaved prM. Post-translationally, N-glycosylated. The excreted form is glycosylated and this is required for efficient secretion of the protein from infected cells. In terms of processing, acetylated by host KAT5. Acetylation modulates NS3 RNA-binding and unwinding activities and plays an important positive role for viral replication. Phosphorylated on serines residues. This phosphorylation may trigger NS5 nuclear localization. Post-translationally, N-glycosylated.

It localises to the virion. The protein localises to the host nucleus. The protein resides in the host cytoplasm. Its subcellular location is the host perinuclear region. It is found in the secreted. It localises to the virion membrane. The protein localises to the host endoplasmic reticulum membrane. The protein resides in the host mitochondrion. The catalysed reaction is Selective hydrolysis of -Xaa-Xaa-|-Yaa- bonds in which each of the Xaa can be either Arg or Lys and Yaa can be either Ser or Ala.. The enzyme catalyses RNA(n) + a ribonucleoside 5'-triphosphate = RNA(n+1) + diphosphate. It catalyses the reaction a ribonucleoside 5'-triphosphate + H2O = a ribonucleoside 5'-diphosphate + phosphate + H(+). It carries out the reaction ATP + H2O = ADP + phosphate + H(+). The catalysed reaction is a 5'-end (5'-triphosphoguanosine)-ribonucleoside in mRNA + S-adenosyl-L-methionine = a 5'-end (N(7)-methyl 5'-triphosphoguanosine)-ribonucleoside in mRNA + S-adenosyl-L-homocysteine. The enzyme catalyses a 5'-end (N(7)-methyl 5'-triphosphoguanosine)-ribonucleoside in mRNA + S-adenosyl-L-methionine = a 5'-end (N(7)-methyl 5'-triphosphoguanosine)-(2'-O-methyl-ribonucleoside) in mRNA + S-adenosyl-L-homocysteine + H(+). Functionally, plays a role in virus budding by binding to the cell membrane and gathering the viral RNA into a nucleocapsid that forms the core of a mature virus particle. During virus entry, may induce genome penetration into the host cytoplasm after hemifusion induced by the surface proteins. Can migrate to the cell nucleus where it modulates host functions. Overcomes the anti-viral effects of host EXOC1 by sequestering and degrading the latter through the proteasome degradation pathway. Its function is as follows. Inhibits RNA silencing by interfering with host Dicer. In terms of biological role, prevents premature fusion activity of envelope proteins in trans-Golgi by binding to envelope protein E at pH6.0. After virion release in extracellular space, gets dissociated from E dimers. Acts as a chaperone for envelope protein E during intracellular virion assembly by masking and inactivating envelope protein E fusion peptide. prM is the only viral peptide matured by host furin in the trans-Golgi network probably to avoid catastrophic activation of the viral fusion activity in acidic Golgi compartment prior to virion release. prM-E cleavage is inefficient, and many virions are only partially matured. These uncleaved prM would play a role in immune evasion. Functionally, may play a role in virus budding. Exerts cytotoxic effects by activating a mitochondrial apoptotic pathway through M extodomain. May display a viroporin activity. Its function is as follows. Binds to host cell surface receptor and mediates fusion between viral and cellular membranes. Envelope protein is synthesized in the endoplasmic reticulum in the form of heterodimer with protein prM. They play a role in virion budding in the ER, and the newly formed immature particle is covered with 60 spikes composed of heterodimer between precursor prM and envelope protein E. The virion is transported to the Golgi apparatus where the low pH causes dissociation of PrM-E heterodimers and formation of E homodimers. prM-E cleavage is ineficient, and many virions are only partially matured. These uncleaved prM would play a role in immune evasion. In terms of biological role, involved in immune evasion, pathogenesis and viral replication. Once cleaved off the polyprotein, is targeted to three destinations: the viral replication cycle, the plasma membrane and the extracellular compartment. Essential for viral replication. Required for formation of the replication complex and recruitment of other non-structural proteins to the ER-derived membrane structures. Excreted as a hexameric lipoparticle that plays a role against host immune response. Antagonizing the complement function. Binds to the host macrophages and dendritic cells. Inhibits signal transduction originating from Toll-like receptor 3 (TLR3). Disrupts the host endothelial glycocalyx layer of host pulmonary microvascular endothelial cells, inducing degradation of sialic acid and shedding of heparan sulfate proteoglycans. NS1 induces expression of sialidases, heparanase, and activates cathepsin L, which activates heparanase via enzymatic cleavage. These effects are probably linked to the endothelial hyperpermeability observed in severe dengue disease. Functionally, component of the viral RNA replication complex that functions in virion assembly and antagonizes the host immune response. Its function is as follows. Required cofactor for the serine protease function of NS3. May have membrane-destabilizing activity and form viroporins. In terms of biological role, displays three enzymatic activities: serine protease, NTPase and RNA helicase. NS3 serine protease, in association with NS2B, performs its autocleavage and cleaves the polyprotein at dibasic sites in the cytoplasm: C-prM, NS2A-NS2B, NS2B-NS3, NS3-NS4A, NS4A-2K and NS4B-NS5. NS3 RNA helicase binds RNA and unwinds dsRNA in the 3' to 5' direction. Regulates the ATPase activity of the NS3 helicase activity. NS4A allows NS3 helicase to conserve energy during unwinding. Plays a role in the inhibition of the host innate immune response. Interacts with host MAVS and thereby prevents the interaction between RIGI and MAVS. In turn, IFN-beta production is impaired. Interacts with host AUP1 which mediates induction of lipophagy in host cells and facilitates production of virus progeny particles. Functionally, functions as a signal peptide for NS4B and is required for the interferon antagonism activity of the latter. Its function is as follows. Induces the formation of ER-derived membrane vesicles where the viral replication takes place. Inhibits interferon (IFN)-induced host STAT1 phosphorylation and nuclear translocation, thereby preventing the establishment of a cellular antiviral state by blocking the IFN-alpha/beta pathway. In terms of biological role, replicates the viral (+) and (-) RNA genome, and performs the capping of genomes in the cytoplasm. NS5 methylates viral RNA cap at guanine N-7 and ribose 2'-O positions. Besides its role in RNA genome replication, also prevents the establishment of cellular antiviral state by blocking the interferon-alpha/beta (IFN-alpha/beta) signaling pathway. Inhibits host TYK2 and STAT2 phosphorylation, thereby preventing activation of JAK-STAT signaling pathway. The polypeptide is Genome polyprotein (Aedes aegypti (Yellowfever mosquito)).